A 589-amino-acid polypeptide reads, in one-letter code: Mitogen-activated protein kinase 8 (589 aa).

Residues 18–56 form a disordered region; the sequence is RPSSSSSSSSSNNNNNNHEQPIFNSSSFSSSSNPNHSAN. Low complexity-rich tracts occupy residues 20 to 34 and 41 to 56; these read SSSSSSSSSNNNNNN and NSSSFSSSSNPNHSAN. The 292-residue stretch at 104-395 folds into the Protein kinase domain; that stretch reads YQIQEVVGKG…AEDALADPYF (292 aa). Residues 110–118 and lysine 133 each bind ATP; that span reads VGKGSYGVV. Aspartate 230 (proton acceptor) is an active-site residue. Threonine 266 is subject to Phosphothreonine. The short motif at 266–268 is the TXY element; sequence TDY. Tyrosine 268 bears the Phosphotyrosine mark. Threonine 271 carries the post-translational modification Phosphothreonine. Residues 474–589 form a disordered region; that stretch reads NQGKPGAAGG…TDKVASLHNS (116 aa).

It belongs to the protein kinase superfamily. CMGC Ser/Thr protein kinase family. MAP kinase subfamily. As to quaternary structure, interacts with CAM3, CAM4 and CAM7 in an calcium-dependent manner. Post-translationally, dually phosphorylated on Thr-266 and Tyr-268, which activates the enzyme. Autophosphorylated. As to expression, ubiquitous.

It catalyses the reaction L-seryl-[protein] + ATP = O-phospho-L-seryl-[protein] + ADP + H(+). The enzyme catalyses L-threonyl-[protein] + ATP = O-phospho-L-threonyl-[protein] + ADP + H(+). Its activity is regulated as follows. Activated by threonine and tyrosine phosphorylation. Activated by two independent mechanisms, the binding of CAMs in a calcium-dependent manner and the phosphorylation by MAP kinase kinase MKK3. Activated in response to mechanical wounding, hydrogen peroxide and jasmonic acid (JA). Functionally, MKK3-MPK8 and CAMs-MPK8 modules negatively regulates ROS accumulation through controlling expression of the RBOHD gene during wounding. The protein is Mitogen-activated protein kinase 8 (MPK8) of Arabidopsis thaliana (Mouse-ear cress).